The primary structure comprises 317 residues: MPVNSTAVSLASVTYISVEILIGLCAIVGNVLVIWVVKLNPSLQTTTFYFIVSLALADIAVGVLVMPLAIVISLGVTIHFYSCLLMTCLLMIFTHASIMSLLAIAVDRYLRVKLTVRYRRVTTQRRIWLALGLCWLVSFLVGLTPMFGWNMKLSSADKNLTFLPCQFRSVMRMDYMVYFSFFTWILIPLVVMCAIYFDIFYVIRNRLSQNFSGSKETGAFYGREFKTAKSLSLVLFLFALSWLPLSIINCIIYFNGEVPQIVLYLGILLSHANSMMNPIVYAYKIKKFKETYLLILKACVICQPSKSMDPSIEQTSE.

The Extracellular segment spans residues Met-1–Thr-14. Residue Asn-4 is glycosylated (N-linked (GlcNAc...) asparagine). Residues Tyr-15–Val-37 form a helical membrane-spanning segment. Residues Lys-38–Phe-48 are Cytoplasmic-facing. The helical transmembrane segment at Tyr-49–Ile-72 threads the bilayer. Residues Ser-73–Leu-84 are Extracellular-facing. A disulfide bridge connects residues Cys-83 and Cys-165. Residues Leu-85–Val-106 form a helical membrane-spanning segment. Residues Asp-107–Arg-126 are Cytoplasmic-facing. Residues Ile-127 to Gly-148 form a helical membrane-spanning segment. Residues Trp-149–Met-176 are Extracellular-facing. A helical transmembrane segment spans residues Val-177–Phe-197. The Cytoplasmic segment spans residues Asp-198 to Ser-230. A helical membrane pass occupies residues Leu-231–Phe-254. The Extracellular segment spans residues Asn-255 to Gln-260. Residues Ile-261 to Tyr-283 traverse the membrane as a helical segment. Residues Lys-284–Glu-317 are Cytoplasmic-facing. Residue Cys-302 is the site of S-palmitoyl cysteine attachment.

This sequence belongs to the G-protein coupled receptor 1 family. Phosphorylation on Thr-315 and Ser-316 may be crucial for rapid desensitization. Phosphorylation on Thr-315 may be necessary for phosphorylation on Ser-316 to occur.

The protein resides in the cell membrane. Functionally, receptor for adenosine. The activity of this receptor is mediated by G proteins which inhibits adenylyl cyclase. In Bos taurus (Bovine), this protein is Adenosine receptor A3 (ADORA3).